The following is a 101-amino-acid chain: Small ribosomal subunit protein bS6 (101 aa).

The protein belongs to the bacterial ribosomal protein bS6 family.

Functionally, binds together with bS18 to 16S ribosomal RNA. This Nitratidesulfovibrio vulgaris (strain ATCC 29579 / DSM 644 / CCUG 34227 / NCIMB 8303 / VKM B-1760 / Hildenborough) (Desulfovibrio vulgaris) protein is Small ribosomal subunit protein bS6.